A 177-amino-acid chain; its full sequence is Probable DNA-directed RNA polymerase subunit delta (177 aa).

The HTH HARE-type domain occupies 14 to 81 (CSMIEVVHSV…GENRWGLRSW (68 aa)). The segment at 90–177 (EILPQPKPKK…ETEEEEEEEL (88 aa)) is disordered. Residues 106 to 177 (DGFDDYIEED…ETEEEEEEEL (72 aa)) show a composition bias toward acidic residues.

It belongs to the RpoE family. In terms of assembly, RNAP is composed of a core of 2 alpha, a beta and a beta' subunits. The core is associated with a delta subunit and one of several sigma factors.

Functionally, participates in both the initiation and recycling phases of transcription. In the presence of the delta subunit, RNAP displays an increased specificity of transcription, a decreased affinity for nucleic acids, and an increased efficiency of RNA synthesis because of enhanced recycling. The protein is Probable DNA-directed RNA polymerase subunit delta of Bacillus cereus (strain B4264).